The chain runs to 85 residues: ATP synthase subunit c (85 aa).

The next 2 helical transmembrane spans lie at 10-30 (IAVA…FAVL) and 53-73 (FIIA…ALLF).

This sequence belongs to the ATPase C chain family. As to quaternary structure, F-type ATPases have 2 components, F(1) - the catalytic core - and F(0) - the membrane proton channel. F(1) has five subunits: alpha(3), beta(3), gamma(1), delta(1), epsilon(1). F(0) has three main subunits: a(1), b(2) and c(10-14). The alpha and beta chains form an alternating ring which encloses part of the gamma chain. F(1) is attached to F(0) by a central stalk formed by the gamma and epsilon chains, while a peripheral stalk is formed by the delta and b chains.

The protein resides in the cell inner membrane. In terms of biological role, f(1)F(0) ATP synthase produces ATP from ADP in the presence of a proton or sodium gradient. F-type ATPases consist of two structural domains, F(1) containing the extramembraneous catalytic core and F(0) containing the membrane proton channel, linked together by a central stalk and a peripheral stalk. During catalysis, ATP synthesis in the catalytic domain of F(1) is coupled via a rotary mechanism of the central stalk subunits to proton translocation. Functionally, key component of the F(0) channel; it plays a direct role in translocation across the membrane. A homomeric c-ring of between 10-14 subunits forms the central stalk rotor element with the F(1) delta and epsilon subunits. The chain is ATP synthase subunit c from Vibrio vulnificus (strain CMCP6).